The chain runs to 121 residues: NAD(P)H-quinone oxidoreductase subunit M (121 aa).

Belongs to the complex I NdhM subunit family. NDH-1 can be composed of about 15 different subunits; different subcomplexes with different compositions have been identified which probably have different functions.

The protein resides in the cellular thylakoid membrane. The enzyme catalyses a plastoquinone + NADH + (n+1) H(+)(in) = a plastoquinol + NAD(+) + n H(+)(out). It catalyses the reaction a plastoquinone + NADPH + (n+1) H(+)(in) = a plastoquinol + NADP(+) + n H(+)(out). Its function is as follows. NDH-1 shuttles electrons from an unknown electron donor, via FMN and iron-sulfur (Fe-S) centers, to quinones in the respiratory and/or the photosynthetic chain. The immediate electron acceptor for the enzyme in this species is believed to be plastoquinone. Couples the redox reaction to proton translocation, and thus conserves the redox energy in a proton gradient. Cyanobacterial NDH-1 also plays a role in inorganic carbon-concentration. The protein is NAD(P)H-quinone oxidoreductase subunit M of Nostoc punctiforme (strain ATCC 29133 / PCC 73102).